Consider the following 85-residue polypeptide: RNA-binding protein Hfq (85 aa).

Residues 10 to 69 enclose the Sm domain; the sequence is DPFLNILRKEHVPVSIYLVNGIKLQGQIESFDQYVVLLKNTVTQMVYKHAISTVVPARPV.

The protein belongs to the Hfq family. In terms of assembly, homohexamer.

Functionally, RNA chaperone that binds small regulatory RNA (sRNAs) and mRNAs to facilitate mRNA translational regulation in response to envelope stress, environmental stress and changes in metabolite concentrations. Also binds with high specificity to tRNAs. In Laribacter hongkongensis (strain HLHK9), this protein is RNA-binding protein Hfq.